A 1427-amino-acid chain; its full sequence is DNA-directed RNA polymerase subunit beta' (1427 aa).

The Zn(2+) site is built by Cys70, Cys72, Cys85, and Cys88. Residues Asp461, Asp463, and Asp465 each coordinate Mg(2+). Positions 838, 912, 919, and 922 each coordinate Zn(2+).

Belongs to the RNA polymerase beta' chain family. In terms of assembly, the RNAP catalytic core consists of 2 alpha, 1 beta, 1 beta' and 1 omega subunit. When a sigma factor is associated with the core the holoenzyme is formed, which can initiate transcription. Mg(2+) is required as a cofactor. Requires Zn(2+) as cofactor.

It catalyses the reaction RNA(n) + a ribonucleoside 5'-triphosphate = RNA(n+1) + diphosphate. DNA-dependent RNA polymerase catalyzes the transcription of DNA into RNA using the four ribonucleoside triphosphates as substrates. In Sorangium cellulosum (strain So ce56) (Polyangium cellulosum (strain So ce56)), this protein is DNA-directed RNA polymerase subunit beta'.